Reading from the N-terminus, the 122-residue chain is UPF0102 protein CLL_A1253 (122 aa).

It belongs to the UPF0102 family.

This is UPF0102 protein CLL_A1253 from Clostridium botulinum (strain Eklund 17B / Type B).